The sequence spans 178 residues: Caveolin-1 (178 aa).

Ser2 is modified (N-acetylserine). The residue at position 2 (Ser2) is a Phosphoserine. The tract at residues 2-94 is required for homooligomerization; that stretch reads SGGKYVDSEG…WKASFTTFTV (93 aa). Residues 2–104 lie on the Cytoplasmic side of the membrane; it reads SGGKYVDSEG…TKYWFYRLLS (103 aa). At Lys5 the chain carries N6-acetyllysine; alternate. A Glycyl lysine isopeptide (Lys-Gly) (interchain with G-Cter in ubiquitin); alternate cross-link involves residue Lys5. Tyr6 is modified (phosphotyrosine). Phosphoserine is present on Ser9. Residue Tyr14 is modified to Phosphotyrosine; by ABL1. The residue at position 25 (Tyr25) is a Phosphotyrosine. Residues Lys26 and Lys30 each participate in a glycyl lysine isopeptide (Lys-Gly) (interchain with G-Cter in ubiquitin) cross-link. Phosphoserine is present on Ser37. Residues Lys39, Lys47, and Lys57 each participate in a glycyl lysine isopeptide (Lys-Gly) (interchain with G-Cter in ubiquitin) cross-link. Positions 82-94 are interaction with CAVIN3; it reads DGIWKASFTTFTV. Residues 105 to 125 constitute an intramembrane region (helical); the sequence is ALFGIPMALIWGIYFAILSFL. The Cytoplasmic portion of the chain corresponds to 126–178; that stretch reads HIWAVVPCIKSFLIEIQCISRVYSIYVHTVCDPLFEAVGKIFSNVRINLQKEI. The interval 131–142 is interacts with SPRY1, SPRY2, SPRY3 and SPRY4; the sequence is VPCIKSFLIEIQ. Residues Cys133, Cys143, and Cys156 are each lipidated (S-palmitoyl cysteine). The interacts with SPRY1, SPRY2, and SPRY4 stretch occupies residues 149-160; the sequence is SIYVHTVCDPLF. Residues 167–178 are interacts with SPRY1, SPRY2, SPRY3 and SPRY4; sequence FSNVRINLQKEI.

Belongs to the caveolin family. In terms of assembly, homooligomer. Interacts with GLIPR2. Interacts with NOSTRIN. Interacts with SNAP25 and STX1A. Interacts (via the N-terminus) with DPP4; the interaction is direct. Interacts with CTNNB1, CDH1 and JUP. Interacts with PACSIN2; this interaction induces membrane tubulation. Interacts with SLC7A9. Interacts with BMX and BTK. Interacts with TGFBR1. Interacts with CAVIN3 (via leucine-zipper domain) in a cholesterol-sensitive manner. Interacts with CAVIN1. Interacts with EHD2 in a cholesterol-dependent manner. Forms a ternary complex with UBXN6 and VCP; mediates CAV1 targeting to lysosomes for degradation. Interacts with ABCG1; this interaction regulates ABCG1-mediated cholesterol efflux. Interacts with NEU3; this interaction enhances NEU3 sialidase activity within caveola. Interacts (via C-terminus) with SPRY1, SPRY2 (via C-terminus), SPRY3, and SPRY4. Interacts with IGFBP5; this interaction allows trafficking of IGFBP5 from the plasma membrane to the nucleus. Phosphorylated at Tyr-14 by ABL1 in response to oxidative stress. Post-translationally, ubiquitinated. Undergo monoubiquitination and multi- and/or polyubiquitination. Monoubiquitination of N-terminal lysines promotes integration in a ternary complex with UBXN6 and VCP which promotes oligomeric CAV1 targeting to lysosomes for degradation. Ubiquitinated by ZNRF1; leading to degradation and modulation of the TLR4-mediated immune response.

The protein localises to the golgi apparatus membrane. It localises to the cell membrane. Its subcellular location is the membrane. It is found in the caveola. The protein resides in the membrane raft. Its function is as follows. May act as a scaffolding protein within caveolar membranes. Forms a stable heterooligomeric complex with CAV2 that targets to lipid rafts and drives caveolae formation. Mediates the recruitment of CAVIN proteins (CAVIN1/2/3/4) to the caveolae. Interacts directly with G-protein alpha subunits and can functionally regulate their activity. Involved in the costimulatory signal essential for T-cell receptor (TCR)-mediated T-cell activation. Its binding to DPP4 induces T-cell proliferation and NF-kappa-B activation in a T-cell receptor/CD3-dependent manner. Recruits CTNNB1 to caveolar membranes and may regulate CTNNB1-mediated signaling through the Wnt pathway. Negatively regulates TGFB1-mediated activation of SMAD2/3 by mediating the internalization of TGFBR1 from membrane rafts leading to its subsequent degradation. Binds 20(S)-hydroxycholesterol (20(S)-OHC). The polypeptide is Caveolin-1 (CAV1) (Pongo abelii (Sumatran orangutan)).